The following is a 340-amino-acid chain: Cytochrome c peroxidase, mitochondrial (340 aa).

The transit peptide at 1–17 directs the protein to the mitochondrion; the sequence is MRSFRAVRNFSTTAKRL. Histidine 101 (proton acceptor) is an active-site residue. The tract at residues 175 to 198 is disordered; it reads WKRGRVDEPESASPPDGSLPDASQ. Residue histidine 224 participates in heme b binding. Tryptophan 240 (tryptophan radical intermediate) is an active-site residue.

This sequence belongs to the peroxidase family. Cytochrome c peroxidase subfamily. In terms of assembly, forms a one-to-one complex with cytochrome c. Heme b serves as cofactor.

The protein resides in the mitochondrion matrix. It is found in the mitochondrion intermembrane space. The catalysed reaction is 2 Fe(II)-[cytochrome c] + H2O2 + 2 H(+) = 2 Fe(III)-[cytochrome c] + 2 H2O. In terms of biological role, destroys radicals which are normally produced within the cells and which are toxic to biological systems. The polypeptide is Cytochrome c peroxidase, mitochondrial (CCP1) (Yarrowia lipolytica (strain CLIB 122 / E 150) (Yeast)).